A 226-amino-acid chain; its full sequence is Ribonuclease 3 (226 aa).

The RNase III domain occupies 4-127 (LEEFEKKLGY…VMGAIYLEKG (124 aa)). Residue glutamate 40 coordinates Mg(2+). The active site involves aspartate 44. Mg(2+) contacts are provided by asparagine 113 and glutamate 116. Glutamate 116 is a catalytic residue. The region spanning 154–223 (DFKTALQEFT…AKEALKILKA (70 aa)) is the DRBM domain.

This sequence belongs to the ribonuclease III family. Homodimer. Requires Mg(2+) as cofactor.

It localises to the cytoplasm. The enzyme catalyses Endonucleolytic cleavage to 5'-phosphomonoester.. Digests double-stranded RNA. Involved in the processing of primary rRNA transcript to yield the immediate precursors to the large and small rRNAs (23S and 16S). Processes some mRNAs, and tRNAs when they are encoded in the rRNA operon. Processes pre-crRNA and tracrRNA of type II CRISPR loci if present in the organism. This is Ribonuclease 3 from Nitratiruptor sp. (strain SB155-2).